Reading from the N-terminus, the 222-residue chain is MGSPFILLNYKTYIQGTGKGAVDIAKACKTVSEESGIEIAVAPQLPDIYRVASEVELSVFSQHMDGIGAGSFTGHVFGKCIKEAGAFGTLINHSERRLTLAEIEASLKAAKEFGLRAIICTNNVPTTAAAAALVPDYVAIEPPELIGSGIPVSKADPEVVSGSVEAVSKINPDVKVLCGAGISKGEDLRAALDLGSQGVLLASGIVKASDPKAALEDLIRLV.

Position 9 to 11 (9 to 11 (NYK)) interacts with substrate. His-93 functions as the Electrophile in the catalytic mechanism. The active-site Proton acceptor is Glu-141. Substrate-binding positions include Ile-146, Gly-181, and 202–203 (AS).

It belongs to the triosephosphate isomerase family. In terms of assembly, homotetramer; dimer of dimers.

Its subcellular location is the cytoplasm. It carries out the reaction D-glyceraldehyde 3-phosphate = dihydroxyacetone phosphate. Its pathway is carbohydrate biosynthesis; gluconeogenesis. It participates in carbohydrate degradation; glycolysis; D-glyceraldehyde 3-phosphate from glycerone phosphate: step 1/1. Functionally, involved in the gluconeogenesis. Catalyzes stereospecifically the conversion of dihydroxyacetone phosphate (DHAP) to D-glyceraldehyde-3-phosphate (G3P). In Methanosarcina mazei (strain ATCC BAA-159 / DSM 3647 / Goe1 / Go1 / JCM 11833 / OCM 88) (Methanosarcina frisia), this protein is Triosephosphate isomerase.